The sequence spans 511 residues: Sodium/proline symporter (511 aa).

Helical transmembrane passes span 16–36 (WQTYIMIAVYFLILMLLAFTY), 53–73 (IGPYITALSAGASDMSGWMIM), 84–104 (LSAMWITIGLTLGAYINYFVV), 138–158 (IISGLIIVVFFTLYTHSGFVS), 173–193 (FGLILVAFIVIFYTFFGGYLA), 199–219 (FFQGVIMLIAMVMVPIVAMMN), 239–259 (LFKGLSFIGIISLFSWGLGYF), 285–305 (ISWMAVGLLGAVAVGLTGIAF), 326–346 (VLFHPLVGGFLLAAILAAIMS), 380–400 (FVMIGRLSVLVVAIVAIAIAW), 409–429 (LVGNAWAGFGASFSPLVLFAL), 437–457 (AGAVSGMVSGALVVIVWIAWI), and 466–486 (IFGLYEIIPGFIVSVIVTYVV).

The protein belongs to the sodium:solute symporter (SSF) (TC 2.A.21) family.

It is found in the cell membrane. The enzyme catalyses L-proline(in) + Na(+)(in) = L-proline(out) + Na(+)(out). Functionally, catalyzes the sodium-dependent uptake of extracellular L-proline. Since most S.aureus strains are L-proline auxotrophs, this transporter may aid the bacterial persistence during an infection of tissues with low proline concentrations. This Staphylococcus aureus protein is Sodium/proline symporter.